The following is a 409-amino-acid chain: DEP domain-containing mTOR-interacting protein (409 aa).

Position 1 is an N-acetylmethionine (Met1). Gly residues predominate over residues 1 to 10; that stretch reads MEEGSSGGSG. The tract at residues 1 to 23 is disordered; that stretch reads MEEGSSGGSGSSDSNAGGSGGVQ. 2 consecutive DEP domains span residues 36–119 and 146–219; these read TGEQ…RFRK and PETT…QFRM. Positions 217 to 235 match the DDEX motif motif; it reads FRMNFRRRRRLMELLNETS. Residue Ser235 is modified to Phosphoserine. At Thr241 the chain carries Phosphothreonine. 2 positions are modified to phosphoserine: Ser244 and Ser258. Thr259 carries the phosphothreonine modification. Ser263, Ser265, Ser280, Ser282, Ser283, Ser286, and Ser287 each carry phosphoserine. The short motif at 286–291 is the BetaTrCP degron motif element; it reads SSGYFS. Phosphotyrosine is present on Tyr289. 2 positions are modified to phosphoserine: Ser291 and Ser293. Thr295 is modified (phosphothreonine). Phosphoserine occurs at positions 297, 298, and 299. The region spanning 330 to 407 is the PDZ domain; that stretch reads TFTIVGDAVG…TIVMEVMEEL (78 aa).

Associated component of the mechanistic target of rapamycin complex 1 (mTORC1) which contains MTOR, MLST8 and RPTOR. Associated component of the mechanistic target of rapamycin complex 2 (mTORC2) which contains MTOR, MLST8, PROTOR1, RICTOR, MAPKAP1 and DEPTOR. Interacts (via PDZ domain) with MTOR; interacts with MTOR within both mTORC1 and mTORC2. Interacts (via PDZ domain) with MINAR1 (via N-terminus). Interacts with SIK3. Post-translationally, phosphorylation weakens interaction with MTOR within mTORC1 and mTORC2. Phosphorylated at Ser-286, Ser-287 and Ser-291 in response to mitogenic stimulation by MTOR: DEPTOR is either directly phosphorylated by MTOR or indirectly via proteins kinases that are activated by MTOR, such as CK1/CSNK1A1. Phosphorylation at Ser-286, Ser-287 and Ser-291 promotes ubiquitination by the SCF(BTRC) complex, followed by degradation. Phosphorylation at Ser-235 by MAPK3/ERK1 promotes deubiquitination by USP7, enhancing its stability. Phosphorylation at Tyr-291 by SYK impairs its interaction with MTOR, promoting mTORC1 and mTORC2 signaling. In terms of processing, ubiquitinated; leading to proteasomal degradation. Ubiquitination by the SCF(BTRC) and SCF(FBXW11) complexes following phosphorylation at Ser-286, Ser-287 and Ser-291 by MTOR, leads to its degradation by the proteasome. Deubiquitinated by OTUB1 in response to amino acid via a non-canonical mechanism, leading to DEPTOR stability. Deubiquitinated by USP7 following phosphorylation at Ser-235, promoting its stability.

Its subcellular location is the lysosome membrane. Inhibited upon phosphatidic acid-binding: phosphatidic acid produced upon mitogenic stimulation promotes DEPTOR dissociatiom from the mTORC1 and mTORC2 complexes, leading to their activation. Specifically binds unsaturated phosphatidic acid, such as 16:0-18:1, 18:0-18:1 and di-18:1. Inhibited when nutrients are present via a feedback loop: phosphorylation by MTOR promotes DEPTOR ubiquitination and degradation. Its function is as follows. Negative regulator of the mTORC1 and mTORC2 complexes: inhibits the protein kinase activity of MTOR, thereby inactivating both complexes. DEPTOR inhibits mTORC1 and mTORC2 to induce autophagy. In contrast to AKT1S1/PRAS40, only partially inhibits mTORC1 activity. The chain is DEP domain-containing mTOR-interacting protein from Mus musculus (Mouse).